Consider the following 200-residue polypeptide: Imidazole glycerol phosphate synthase subunit HisH (200 aa).

The Glutamine amidotransferase type-1 domain maps to 3-200; it reads DLALIDAGGA…LRNFLEMSFP (198 aa). C78 serves as the catalytic Nucleophile. Catalysis depends on residues H179 and E181.

In terms of assembly, heterodimer of HisH and HisF.

It is found in the cytoplasm. It catalyses the reaction 5-[(5-phospho-1-deoxy-D-ribulos-1-ylimino)methylamino]-1-(5-phospho-beta-D-ribosyl)imidazole-4-carboxamide + L-glutamine = D-erythro-1-(imidazol-4-yl)glycerol 3-phosphate + 5-amino-1-(5-phospho-beta-D-ribosyl)imidazole-4-carboxamide + L-glutamate + H(+). The enzyme catalyses L-glutamine + H2O = L-glutamate + NH4(+). The protein operates within amino-acid biosynthesis; L-histidine biosynthesis; L-histidine from 5-phospho-alpha-D-ribose 1-diphosphate: step 5/9. Functionally, IGPS catalyzes the conversion of PRFAR and glutamine to IGP, AICAR and glutamate. The HisH subunit catalyzes the hydrolysis of glutamine to glutamate and ammonia as part of the synthesis of IGP and AICAR. The resulting ammonia molecule is channeled to the active site of HisF. This is Imidazole glycerol phosphate synthase subunit HisH from Xanthomonas campestris pv. campestris (strain 8004).